The sequence spans 115 residues: Non-specific lipid-transfer protein 4.2 (115 aa).

An N-terminal signal peptide occupies residues 1–25; the sequence is MARAAATQLVLVAMVAAMLIVATDA. 4 disulfides stabilise this stretch: C29/C77, C39/C54, C55/C97, and C75/C111.

It belongs to the plant LTP family.

Plant non-specific lipid-transfer proteins transfer phospholipids as well as galactolipids across membranes. May play a role in wax or cutin deposition in the cell walls of expanding epidermal cells and certain secretory tissues. This chain is Non-specific lipid-transfer protein 4.2 (LTP4.2), found in Hordeum vulgare (Barley).